We begin with the raw amino-acid sequence, 581 residues long: MIPPVQPDFKSHFTDILRNALNERGLADLNLDIEFARPRQSSHGDYSCNLAMQLAKPLRQKPRDIAQSLATAFSASPYLEKVEIAGAGFINLFLTTSAKQQFSRYVLESGEKFGHSSMGAGEKIQVEFVSANPTGPLHVGHGRGAAFGASLANVLAAAGYSVTREYYINDAGRQMDILALSTWLRYLELNGVASAFPPNAYQGEYVRDMARLIHKAHAGRYVHEPELLFDRVAGAEADTEAALDGLIANAKKLLGQDYAYIHNFVLNEQLGDCRNDLMEFGVTFDIWFSEQSLFDSGGVAQAVHLLEEGNYLYQQDGAKWFRSSHFGDEKDRVVQRENGQFTYFASDIAYHLNKFSRGFDRVIDIWGADHHGYISRVKGAMQALALDPEKLEIALVQFAVLYRDGKKVPMSTRAGEFVTLRELRQEVGTDAARFFYVLRKSDQHLDFDLDLAKSQSTDNPVYYVQYAHARVCSVLEQWGEDPGMLVTADTSALTGAAELSLLQKLIDYPETVEAAAREFSPHLIAFYLKELAGEFHSYYNSTRFLVPEMTVRLARLALVAAVRQVLNNGLKLLGVSAPAKM.

The short motif at 131–141 (ANPTGPLHVGH) is the 'HIGH' region element.

It belongs to the class-I aminoacyl-tRNA synthetase family. As to quaternary structure, monomer.

The protein resides in the cytoplasm. The catalysed reaction is tRNA(Arg) + L-arginine + ATP = L-arginyl-tRNA(Arg) + AMP + diphosphate. The sequence is that of Arginine--tRNA ligase from Nitrosospira multiformis (strain ATCC 25196 / NCIMB 11849 / C 71).